The primary structure comprises 143 residues: Ribosome-binding factor A (143 aa).

The interval 123–143 (DKSLQENYKQNDKETKAEKLR) is disordered.

This sequence belongs to the RbfA family. In terms of assembly, monomer. Binds 30S ribosomal subunits, but not 50S ribosomal subunits or 70S ribosomes.

It localises to the cytoplasm. Its function is as follows. One of several proteins that assist in the late maturation steps of the functional core of the 30S ribosomal subunit. Associates with free 30S ribosomal subunits (but not with 30S subunits that are part of 70S ribosomes or polysomes). Required for efficient processing of 16S rRNA. May interact with the 5'-terminal helix region of 16S rRNA. The sequence is that of Ribosome-binding factor A from Francisella tularensis subsp. novicida (strain U112).